The chain runs to 175 residues: Ferritin light chain (175 aa).

Residues glutamine 7–serine 156 form the Ferritin-like diiron domain. Residues glutamate 54, glutamate 57, glutamate 58, glutamate 61, and glutamate 64 each contribute to the Fe cation site.

This sequence belongs to the ferritin family. As to quaternary structure, oligomer of 24 subunits. There are two types of subunits: L (light) chain and H (heavy) chain. The major chain can be light or heavy, depending on the species and tissue type. The functional molecule forms a roughly spherical shell with a diameter of 12 nm and contains a central cavity into which the insoluble mineral iron core is deposited. Interacts with NCOA4.

It is found in the cytoplasmic vesicle. The protein resides in the autophagosome. Its subcellular location is the cytoplasm. It localises to the autolysosome. In terms of biological role, stores iron in a soluble, non-toxic, readily available form. Important for iron homeostasis. Iron is taken up in the ferrous form and deposited as ferric hydroxides after oxidation. Also plays a role in delivery of iron to cells. Mediates iron uptake in capsule cells of the developing kidney. Delivery to lysosomes by the cargo receptor NCOA4 for autophagic degradation and release or iron. This Oryctolagus cuniculus (Rabbit) protein is Ferritin light chain (FTL).